Reading from the N-terminus, the 319-residue chain is Taste receptor type 2 member 7 (319 aa).

The Extracellular segment spans residues 1-9 (MADKVQTTL). Residues 10–30 (LFLAVGEFSVGILGNAFIGLV) form a helical membrane-spanning segment. The Cytoplasmic segment spans residues 31–55 (NCMDWVKKRKIASIDLILTSLAISR). A helical transmembrane segment spans residues 56–76 (ICLLCVILLDCFILVLYPDVY). Residues 77–94 (ATGKEMRIIDFFWTLTNH) are Extracellular-facing. A helical transmembrane segment spans residues 95–115 (LSIWFATCLSIYYXFRIANFF). Residues 116 to 128 (HPLFLWMKWRIDR) lie on the Cytoplasmic side of the membrane. The chain crosses the membrane as a helical span at residues 129-149 (VISWILLGCVVLSVFISLPAT). The Extracellular portion of the chain corresponds to 150–187 (ENLNADFRFCVKAKRKTNLTWSCRVNKTQHASTKLFLN). N-linked (GlcNAc...) asparagine glycans are attached at residues N167 and N175. A helical membrane pass occupies residues 188 to 208 (LATLLPFCVCLMSFFLLILSL). Residues 209 to 235 (RRHIRRMQLSATGCRDPSTEAHVRALK) lie on the Cytoplasmic side of the membrane. A helical membrane pass occupies residues 236 to 256 (AVISFLLLFIAYYLSFLVATS). Over 257–266 (SYFMPETELA) the chain is Extracellular. A helical transmembrane segment spans residues 267–287 (VIFGESIALIYPSSHSFILIL). Over 288–319 (GNNKLRHASLKVIWKVMSILKGRKFQQHKQIG) the chain is Cytoplasmic.

It belongs to the G-protein coupled receptor T2R family.

Its subcellular location is the membrane. In terms of biological role, gustducin-coupled receptor implicated in the perception of bitter compounds in the oral cavity and the gastrointestinal tract. Signals through PLCB2 and the calcium-regulated cation channel TRPM5. The polypeptide is Taste receptor type 2 member 7 (TAS2R7) (Pan troglodytes (Chimpanzee)).